Reading from the N-terminus, the 661-residue chain is UvrABC system protein B (661 aa).

In terms of domain architecture, Helicase ATP-binding spans 26 to 413 (KGIQEGKKHQ…TDEMVEQIIR (388 aa)). 39-46 (GATGTGKT) is a binding site for ATP. The Beta-hairpin motif lies at 92 to 115 (YYDYYQPEAYVPQTDTFIEKDASI). In terms of domain architecture, Helicase C-terminal spans 430–596 (QIDDLIGEIQ…TINKEIRDVI (167 aa)). In terms of domain architecture, UVR spans 625-660 (QKVVEQMEHEMKEAAKALDFERAAELRDLLLELKAE).

It belongs to the UvrB family. As to quaternary structure, forms a heterotetramer with UvrA during the search for lesions. Interacts with UvrC in an incision complex.

It localises to the cytoplasm. In terms of biological role, the UvrABC repair system catalyzes the recognition and processing of DNA lesions. A damage recognition complex composed of 2 UvrA and 2 UvrB subunits scans DNA for abnormalities. Upon binding of the UvrA(2)B(2) complex to a putative damaged site, the DNA wraps around one UvrB monomer. DNA wrap is dependent on ATP binding by UvrB and probably causes local melting of the DNA helix, facilitating insertion of UvrB beta-hairpin between the DNA strands. Then UvrB probes one DNA strand for the presence of a lesion. If a lesion is found the UvrA subunits dissociate and the UvrB-DNA preincision complex is formed. This complex is subsequently bound by UvrC and the second UvrB is released. If no lesion is found, the DNA wraps around the other UvrB subunit that will check the other stand for damage. In Bacillus subtilis (strain 168), this protein is UvrABC system protein B.